Here is a 4265-residue protein sequence, read N- to C-terminus: Dynein axonemal heavy chain 1 (4265 aa).

A disordered region spans residues 1–88 (MEQPNSKGYS…KSPLTGTDKK (88 aa)). The tract at residues 1–1542 (MEQPNSKGYS…YIRAVNAEFI (1542 aa)) is stem. The span at 60 to 69 (PHLPLPPAPP) shows a compositional bias: pro residues. 4 AAA regions span residues 1543–1764 (YGYE…VISA), 1824–2057 (EAIR…SSVK), 2189–2449 (TMVP…VFQG), and 2547–2799 (DYNQ…LTRH). Positions 1581 to 1588 (GPAGTGKT) match the GPAGTGKT motif motif. ATP is bound at residue 1581–1588 (GPAGTGKT). Residues 1631–1637 (CFDEFNR) carry the CFDEFNR motif motif. Residues 1862–1869 (GPTGSGKS), 2227–2234 (GPTGTGKT), and 2586–2593 (GVGGSGRS) contribute to the ATP site. The interval 2814–3112 (FSILIGQKKL…EELELKCEQC (299 aa)) is stalk. A coiled-coil region spans residues 3074–3122 (LDEAKQRLREVEDGIATMQAKYRECITKKEELELKCEQCEQRLGRAGKL). AAA regions lie at residues 3197–3427 (LGNP…EIQA) and 3640–3859 (MQDF…QLKM).

Belongs to the dynein heavy chain family. In terms of assembly, consists of at least two heavy chains and a number of intermediate and light chains. Expressed primarily in trachea and testis, 2 tissues containing axonemal structures. Also expressed in brain.

Its subcellular location is the cytoplasm. The protein localises to the cytoskeleton. The protein resides in the cilium axoneme. It is found in the cell projection. It localises to the cilium. Its subcellular location is the flagellum. Functionally, force generating protein of cilia required for sperm flagellum motility. Produces force towards the minus ends of microtubules. Dynein has ATPase activity; the force-producing power stroke is thought to occur on release of ADP. Required in spermatozoa for the formation of the inner dynein arms and biogenesis of the axoneme. The protein is Dynein axonemal heavy chain 1 of Homo sapiens (Human).